We begin with the raw amino-acid sequence, 162 residues long: Shikimate kinase (162 aa).

An ATP-binding site is contributed by 11 to 16; it reads GSGKSS. Ser-15 contributes to the Mg(2+) binding site. Residues Asp-33, Arg-57, and Gly-80 each contribute to the substrate site. The interval 109-123 is LID domain; that stretch reads NQKEREKRPLLNNLT. Arg-116 is an ATP binding site. Substrate is bound at residue Arg-132.

It belongs to the shikimate kinase family. In terms of assembly, monomer. The cofactor is Mg(2+).

It localises to the cytoplasm. It carries out the reaction shikimate + ATP = 3-phosphoshikimate + ADP + H(+). Its pathway is metabolic intermediate biosynthesis; chorismate biosynthesis; chorismate from D-erythrose 4-phosphate and phosphoenolpyruvate: step 5/7. Functionally, catalyzes the specific phosphorylation of the 3-hydroxyl group of shikimic acid using ATP as a cosubstrate. The protein is Shikimate kinase (aroK) of Helicobacter pylori (strain ATCC 700392 / 26695) (Campylobacter pylori).